The following is a 995-amino-acid chain: UPF0182 protein MUL_2505 (995 aa).

7 consecutive transmembrane segments (helical) span residues 18 to 38, 63 to 83, 113 to 133, 175 to 195, 210 to 230, 259 to 279, and 287 to 307; these read VLILIALGVIALLLAGPRLID, FLVFLVAGVLVGGIVFAGLAL, LFGIGIPAAIGLLAGIVAQSY, FVAIFLAFVANVVSHYLFGGI, IQLVSLVGVLVLLKTVAYWLN, KLILMAIAVICAAAVFSAIVL, and IGLVLLLLSSLIVGAAWPMIV. The disordered stretch occupies residues 900-947; it reads AATGIQPTEGGAPANVPPNNAPSPEALPGTPPSPPTAVPPAPEASVTL. Positions 928–941 are enriched in pro residues; that stretch reads GTPPSPPTAVPPAP.

The protein belongs to the UPF0182 family.

The protein resides in the cell membrane. This Mycobacterium ulcerans (strain Agy99) protein is UPF0182 protein MUL_2505.